Consider the following 173-residue polypeptide: Inorganic pyrophosphatase (173 aa).

Substrate is bound by residues Lys-29, Arg-43, and Tyr-55. Residues Asp-65, Asp-70, and Asp-102 each coordinate Mg(2+). Tyr-141 is a substrate binding site.

The protein belongs to the PPase family. In terms of assembly, homohexamer. It depends on Mg(2+) as a cofactor.

It localises to the cytoplasm. The catalysed reaction is diphosphate + H2O = 2 phosphate + H(+). Functionally, catalyzes the hydrolysis of inorganic pyrophosphate (PPi) forming two phosphate ions. The polypeptide is Inorganic pyrophosphatase (Rickettsia conorii (strain ATCC VR-613 / Malish 7)).